The following is a 274-amino-acid chain: Reaction center protein L chain (274 aa).

The Cytoplasmic segment spans residues 2–32; the sequence is ALLSFERKYRVRGGTLIGGDLFDFWVGPYFV. Residues 33–53 form a helical membrane-spanning segment; sequence GFFGVSAIFFIFLGVSLIGYA. Over 54 to 83 the chain is Periplasmic; that stretch reads ASQGPTWDPFAISINPPDLKYGLGAAPLLE. A helical transmembrane segment spans residues 84–111; sequence GGFWQAITVCALGAFISWMLREVEISRK. The Cytoplasmic portion of the chain corresponds to 112-115; that stretch reads LGIG. The chain crosses the membrane as a helical span at residues 116–139; sequence WHVPLAFCVPIFMFCVLQVFRPLL. Topologically, residues 140–170 are periplasmic; it reads LGSWGHAFPYGILSHLDWVNNFGYQYLNWHY. Residues His154 and His174 each contribute to the (7R,8Z)-bacteriochlorophyll b site. Residues 171–198 traverse the membrane as a helical segment; it reads NPGHMSSVSFLFVNAMALGLHGGLILSV. Position 191 (His191) interacts with Fe cation. At 199-225 the chain is on the cytoplasmic side; it reads ANPGDGDKVKTAEHENQYFRDVVGYSI. Phe217 contacts a ubiquinone. A helical membrane pass occupies residues 226-249; sequence GALSIHRLGLFLASNIFLTGAFGT. Residue His231 participates in Fe cation binding. Residues 250-274 are Periplasmic-facing; the sequence is IASGPFWTRGWPEWWGWWLDIPFWS.

The protein belongs to the reaction center PufL/M/PsbA/D family. As to quaternary structure, reaction center is composed of four bacteriochlorophylls, two bacteriopheophytins, two ubiquinones, one iron, and three highly hydrophobic polypeptide chains (designated L, M, and H).

The protein resides in the cellular chromatophore membrane. The reaction center is a membrane-bound complex that mediates the initial photochemical event in the electron transfer process of photosynthesis. In Blastochloris viridis (Rhodopseudomonas viridis), this protein is Reaction center protein L chain (pufL).